A 208-amino-acid chain; its full sequence is Imidazoleglycerol-phosphate dehydratase (208 aa).

The tract at residues 1 to 20 (MSRRATVKAPRAGAAARRGA) is disordered. Low complexity predominate over residues 7-19 (VKAPRAGAAARRG).

It belongs to the imidazoleglycerol-phosphate dehydratase family.

The protein localises to the cytoplasm. The enzyme catalyses D-erythro-1-(imidazol-4-yl)glycerol 3-phosphate = 3-(imidazol-4-yl)-2-oxopropyl phosphate + H2O. It participates in amino-acid biosynthesis; L-histidine biosynthesis; L-histidine from 5-phospho-alpha-D-ribose 1-diphosphate: step 6/9. This chain is Imidazoleglycerol-phosphate dehydratase, found in Anaeromyxobacter sp. (strain K).